The sequence spans 160 residues: Ureidoglycolate lyase (160 aa).

This sequence belongs to the ureidoglycolate lyase family. In terms of assembly, homodimer. Ni(2+) is required as a cofactor.

It catalyses the reaction (S)-ureidoglycolate = urea + glyoxylate. It functions in the pathway nitrogen metabolism; (S)-allantoin degradation. Catalyzes the catabolism of the allantoin degradation intermediate (S)-ureidoglycolate, generating urea and glyoxylate. Involved in the anaerobic utilization of allantoin as sole nitrogen source. Reinforces the induction of genes involved in the degradation of allantoin and glyoxylate by producing glyoxylate. This Escherichia coli (strain K12 / MC4100 / BW2952) protein is Ureidoglycolate lyase.